A 367-amino-acid polypeptide reads, in one-letter code: Leucine dehydrogenase (367 aa).

Residue K80 is part of the active site. 180–186 (GVGNVAY) contacts NAD(+).

It belongs to the Glu/Leu/Phe/Val dehydrogenases family. As to quaternary structure, homohexamer.

It carries out the reaction L-leucine + NAD(+) + H2O = 4-methyl-2-oxopentanoate + NH4(+) + NADH + H(+). Its pathway is amino-acid degradation; L-leucine degradation; 4-methyl-2-oxopentanoate from L-leucine (dehydrogenase route): step 1/1. In terms of biological role, catalyzes the reversible deamination of L-leucine to 4-methyl-2-oxopentanoate. This is Leucine dehydrogenase (ldh) from Geobacillus stearothermophilus (Bacillus stearothermophilus).